The primary structure comprises 359 residues: Cell division protein ZipA (359 aa).

The Periplasmic portion of the chain corresponds to 1–4 (MDLN). A helical membrane pass occupies residues 5 to 25 (TILIILGILALVALVAHGLWS). At 26–359 (NRREKSQYFE…AEEEYLAKIK (334 aa)) the chain is on the cytoplasmic side. Residues 78 to 101 (PPVQQPLNTEPEPITQETPVRAEP) are disordered.

The protein belongs to the ZipA family. As to quaternary structure, interacts with FtsZ via their C-terminal domains.

It is found in the cell inner membrane. Functionally, essential cell division protein that stabilizes the FtsZ protofilaments by cross-linking them and that serves as a cytoplasmic membrane anchor for the Z ring. Also required for the recruitment to the septal ring of downstream cell division proteins. In Mannheimia succiniciproducens (strain KCTC 0769BP / MBEL55E), this protein is Cell division protein ZipA.